The primary structure comprises 185 residues: Ribosome-recycling factor (185 aa).

It belongs to the RRF family.

It localises to the cytoplasm. Functionally, responsible for the release of ribosomes from messenger RNA at the termination of protein biosynthesis. May increase the efficiency of translation by recycling ribosomes from one round of translation to another. The protein is Ribosome-recycling factor of Geobacillus sp. (strain WCH70).